A 593-amino-acid polypeptide reads, in one-letter code: NADH-quinone oxidoreductase subunit C/D (593 aa).

The segment at 1–184 is NADH dehydrogenase I subunit C; sequence MTADNALYIP…DPYSLTLAKQ (184 aa). The NADH dehydrogenase I subunit D stretch occupies residues 208–593; it reads DYMFLNLGPN…IDFVMADVDR (386 aa).

This sequence in the N-terminal section; belongs to the complex I 30 kDa subunit family. The protein in the C-terminal section; belongs to the complex I 49 kDa subunit family. NDH-1 is composed of 13 different subunits. Subunits NuoB, CD, E, F, and G constitute the peripheral sector of the complex.

It is found in the cell inner membrane. It catalyses the reaction a quinone + NADH + 5 H(+)(in) = a quinol + NAD(+) + 4 H(+)(out). In terms of biological role, NDH-1 shuttles electrons from NADH, via FMN and iron-sulfur (Fe-S) centers, to quinones in the respiratory chain. The immediate electron acceptor for the enzyme in this species is believed to be ubiquinone. Couples the redox reaction to proton translocation (for every two electrons transferred, four hydrogen ions are translocated across the cytoplasmic membrane), and thus conserves the redox energy in a proton gradient. In Pseudomonas syringae pv. syringae (strain B728a), this protein is NADH-quinone oxidoreductase subunit C/D.